A 274-amino-acid polypeptide reads, in one-letter code: Phosphatidylglycerol--prolipoprotein diacylglyceryl transferase (274 aa).

4 helical membrane-spanning segments follow: residues 16–36, 62–82, 94–114, and 129–149; these read VGLHLSWYGIFFSLGIFLSSF, FALGALLVIVIGARAFYVLFY, IIKIWKGGLSSHGAIIALVIW, and LSVTYICDICGAVFGVAALLI. Arg-150 is an a 1,2-diacyl-sn-glycero-3-phospho-(1'-sn-glycerol) binding site. Helical transmembrane passes span 184–204, 213–233, and 247–267; these read VQLYEGVSYLLLSLVLYWLCY, GYSAAGALIGVASIRFCAEFF, and LTIGQWLSIPMVFLGIGILWI.

It belongs to the Lgt family.

It localises to the cell inner membrane. It carries out the reaction L-cysteinyl-[prolipoprotein] + a 1,2-diacyl-sn-glycero-3-phospho-(1'-sn-glycerol) = an S-1,2-diacyl-sn-glyceryl-L-cysteinyl-[prolipoprotein] + sn-glycerol 1-phosphate + H(+). Its pathway is protein modification; lipoprotein biosynthesis (diacylglyceryl transfer). Catalyzes the transfer of the diacylglyceryl group from phosphatidylglycerol to the sulfhydryl group of the N-terminal cysteine of a prolipoprotein, the first step in the formation of mature lipoproteins. In Chlamydia muridarum (strain MoPn / Nigg), this protein is Phosphatidylglycerol--prolipoprotein diacylglyceryl transferase.